The following is a 252-amino-acid chain: Tumor necrosis factor ligand superfamily member 15 (252 aa).

Topologically, residues 1–39 are cytoplasmic; sequence MAEELGLGFGEGVPVEVLPEGCRHRPEARAGLAARSKAC. The helical; Signal-anchor for type II membrane protein transmembrane segment at 40-60 threads the bilayer; the sequence is LALTCCLLSFPILAGLSTLLM. At 61-252 the chain is on the extracellular side; the sequence is AGQLRVPGKD…DKTFFGAFLL (192 aa). The THD domain maps to 96 to 252; it reads PRAHLTIKKQ…DKTFFGAFLL (157 aa). A glycan (N-linked (GlcNAc...) asparagine) is linked at Asn-137. A disulfide bridge connects residues Cys-163 and Cys-203. The N-linked (GlcNAc...) asparagine glycan is linked to Asn-230.

It belongs to the tumor necrosis factor family. Homotrimer.

It localises to the membrane. In terms of biological role, receptor for TNFRSF25 and TNFRSF6B. Mediates activation of NF-kappa-B. Inhibits vascular endothelial growth and angiogenesis (in vitro). Promotes activation of caspases and apoptosis. Promotes splenocyte alloactivation. The sequence is that of Tumor necrosis factor ligand superfamily member 15 (Tnfsf15) from Mus musculus (Mouse).